Consider the following 76-residue polypeptide: MGLCFPCPAESAPPSPSPEEKRAKLAEAAERRQKEAASRGILDIQSVEAKKKKKEQLEKQMETSGPPAGGLRWTVS.

A disordered region spans residues 1-76 (MGLCFPCPAE…PAGGLRWTVS (76 aa)). G2 carries the N-myristoyl glycine lipid modification. Residues C4 and C7 are each lipidated (S-palmitoyl cysteine). Positions 18–37 (PEEKRAKLAEAAERRQKEAA) are enriched in basic and acidic residues. The segment at 21-33 (KRAKLAEAAERRQ) is VCP/p97-interacting motif (VIM). The residue at position 46 (S46) is a Phosphoserine.

Belongs to the SVIP family. As to quaternary structure, interacts with VCP. Forms a complex with VCP/p97 and DERL1. In terms of tissue distribution, ubiquitous. In the adrenal gland, it is expressed in the cortex at all developmental stages.

The protein localises to the membrane. Its subcellular location is the smooth endoplasmic reticulum membrane. It localises to the golgi apparatus membrane. The protein resides in the cell membrane. It is found in the lysosome membrane. Its function is as follows. Negative regulator of the ER-associated degradation pathway (ERAD) of misfolded proteins. It competes with AMFR/gp78 for binding VCP/p97, and inhibits AMFR/gp78-VCP/p97 complex formation that is required for degradation of ERAD substrates. Involved in the regulation of adrenal cortisol and dehydroepiandrosterone (DHEA) biosynthesis. The polypeptide is Small VCP/p97-interacting protein (Svip) (Rattus norvegicus (Rat)).